The sequence spans 312 residues: Ribosomal RNA small subunit methyltransferase H (312 aa).

A disordered region spans residues 1 to 24 (MNIMTANQGAVSPSQTESEASPPT). S-adenosyl-L-methionine contacts are provided by residues 55–57 (AGH), D72, Y96, D117, and Q124. A disordered region spans residues 288 to 312 (EQVDNPRARSAKLRVGERAAAPEGS).

This sequence belongs to the methyltransferase superfamily. RsmH family.

It is found in the cytoplasm. The catalysed reaction is cytidine(1402) in 16S rRNA + S-adenosyl-L-methionine = N(4)-methylcytidine(1402) in 16S rRNA + S-adenosyl-L-homocysteine + H(+). In terms of biological role, specifically methylates the N4 position of cytidine in position 1402 (C1402) of 16S rRNA. The sequence is that of Ribosomal RNA small subunit methyltransferase H from Deinococcus radiodurans (strain ATCC 13939 / DSM 20539 / JCM 16871 / CCUG 27074 / LMG 4051 / NBRC 15346 / NCIMB 9279 / VKM B-1422 / R1).